The following is a 595-amino-acid chain: Probable serine/threonine-protein kinase fhkC (595 aa).

The disordered stretch occupies residues methionine 1 to aspartate 84. The segment covering glutamate 18–glutamine 31 has biased composition (low complexity). Over residues isoleucine 32–aspartate 49 the composition is skewed to polar residues. Residues asparagine 50 to asparagine 70 are compositionally biased toward low complexity. The 55-residue stretch at isoleucine 116–isoleucine 170 folds into the FHA domain. Residues tyrosine 218 to phenylalanine 479 form the Protein kinase domain. ATP contacts are provided by residues leucine 224–valine 232 and lysine 247. The active-site Proton acceptor is the aspartate 342. Position 377 is a phosphothreonine; by autocatalysis (threonine 377). Residues lysine 494–asparagine 595 form a disordered region. Residues proline 508–valine 520 are compositionally biased toward polar residues. Over residues aspartate 530–asparagine 567 the composition is skewed to low complexity. The segment covering asparagine 585–asparagine 595 has biased composition (basic and acidic residues).

This sequence belongs to the protein kinase superfamily. CAMK Ser/Thr protein kinase family. CHK2 subfamily.

It carries out the reaction L-seryl-[protein] + ATP = O-phospho-L-seryl-[protein] + ADP + H(+). It catalyses the reaction L-threonyl-[protein] + ATP = O-phospho-L-threonyl-[protein] + ADP + H(+). The chain is Probable serine/threonine-protein kinase fhkC (fhkC) from Dictyostelium discoideum (Social amoeba).